Consider the following 1059-residue polypeptide: Potassium transporter TRK1 (1059 aa).

Over Met1–Asn46 the chain is Cytoplasmic. A helical transmembrane segment spans residues Phe47–Tyr67. Residues Pro68–Ala73 are Extracellular-facing. An intramembrane segment occupies Tyr74–Leu90. Residues Asn91–Ser99 lie on the Extracellular side of the membrane. Residues Leu100–Leu122 form a helical membrane-spanning segment. Residues Leu123–Lys625 lie on the Cytoplasmic side of the membrane. Disordered stretches follow at residues Arg180–Glu276, Ile304–Asp350, and Pro404–Asn574. The span at Ser186–Thr203 shows a compositional bias: low complexity. Residues Glu236–Arg245 are compositionally biased toward basic and acidic residues. Positions Pro335–Asn344 are enriched in polar residues. Residues Thr412–Ser423 show a composition bias toward low complexity. Composition is skewed to acidic residues over residues Asp428–Ser449 and Tyr469–Glu490. Over residues Arg524–Ser536 the composition is skewed to polar residues. Residues Lys540–Arg552 show a composition bias toward basic residues. Residues Asn556 to Ser566 are compositionally biased toward polar residues. Residues Leu626–Trp649 form a helical membrane-spanning segment. Topologically, residues Ile650 to Ala668 are extracellular. An intramembrane segment occupies Trp669–Thr685. Residues Leu686–Gln696 are Extracellular-facing. The chain crosses the membrane as a helical span at residues Asn697–Thr713. Topologically, residues Gly714–Ser757 are cytoplasmic. Residues Val758–Leu781 traverse the membrane as a helical segment. The Extracellular portion of the chain corresponds to Asp782–Arg796. The stretch at Val797–Ser813 is an intramembrane region. Residues Val814–Leu820 lie on the Extracellular side of the membrane. A helical membrane pass occupies residues His821–Arg844. Over Arg845–His877 the chain is Cytoplasmic. The chain crosses the membrane as a helical span at residues Leu878–Ala899. The Extracellular portion of the chain corresponds to Glu900–Ser912. Residues Ile913–Met931 lie within the membrane without spanning it. Residues Gly932–Asn945 are Extracellular-facing. The chain crosses the membrane as a helical span at residues Val946–Ile968. At Asp969 to Val1059 the chain is on the cytoplasmic side.

The protein belongs to the TrkH potassium transport family.

It is found in the cell membrane. It carries out the reaction K(+)(in) = K(+)(out). The enzyme catalyses chloride(in) = chloride(out). Its activity is regulated as follows. TRK1-mediated chloride conductance is blocked by 4,4'-diisothiocyanatostilbene-2,2'-disulfonic acid. In terms of biological role, potassium transporter that mediates K(+) influx, as well as Cl(-) efflux as a secondary function. TRK1 is the major K(+) uptake transporter that regulates membrane potential and intracellular pH. The TRK1-mediated Cl(-) efflux should serve as a Cl(-) detoxification route and may play a role in sustaining C.albicans on mammalian epithelial surfaces, or in physiological saline solutions such as saliva. Functionally, mediates candidacidal activities of cysteine-free peptides, but not of defensins. The hallmark of salivary gland-secreted histatin-5 (Hst 5) killing of C.albicans is the rapid efflux of cellular ATP and other small nucleotides and ions from the cell as well as concurrent intracellular uptake of propidium iodide (PI). TRK1 is the channel for Hst 5-induced killing and histatin-5 may directly or indirectly alter TRK1 function, allowing the efflux of larger anions, including ATP, and the influx of small cationic dyes, such as PI. This is Potassium transporter TRK1 from Candida albicans (Yeast).